The following is a 109-amino-acid chain: Phosphoribosyl-ATP pyrophosphatase (109 aa).

The protein belongs to the PRA-PH family.

It localises to the cytoplasm. The enzyme catalyses 1-(5-phospho-beta-D-ribosyl)-ATP + H2O = 1-(5-phospho-beta-D-ribosyl)-5'-AMP + diphosphate + H(+). The protein operates within amino-acid biosynthesis; L-histidine biosynthesis; L-histidine from 5-phospho-alpha-D-ribose 1-diphosphate: step 2/9. This Azorhizobium caulinodans (strain ATCC 43989 / DSM 5975 / JCM 20966 / LMG 6465 / NBRC 14845 / NCIMB 13405 / ORS 571) protein is Phosphoribosyl-ATP pyrophosphatase.